The chain runs to 326 residues: MTIKLAITPGEPAGVGPDLIITLAQQQWQAMLVVFANAELMRTRANELNIPLTLLPYDASRTDIQPAGSLYIVDIPLQDEVIAGKLNPTNSQYVLDTLHQACQMNLNGEFQALVTGPVHKGVINEAGIPFSGHTEFFAQQSNTPEVVMMLATEGLRVTLATTHIPVTAVSAAITQPKLDNVIRIIDHDLRTKFGIAKPHIFVCGLNPHAGEDGHIGREEIDTIIPALNALRQEGITLTGPLPADTIFNPKYLQQADTVLAMYHDQGLPVLKYKGFSQAVNITLGLPFIRTSVDHGTALDLAATGQADVGSFSIAIKEAISLAKSTQ.

Residues His-133 and Thr-134 each contribute to the substrate site. A divalent metal cation is bound by residues His-163, His-208, and His-263. 3 residues coordinate substrate: Lys-271, Asn-280, and Arg-289.

This sequence belongs to the PdxA family. In terms of assembly, homodimer. Zn(2+) is required as a cofactor. Requires Mg(2+) as cofactor. The cofactor is Co(2+).

The protein resides in the cytoplasm. The enzyme catalyses 4-(phosphooxy)-L-threonine + NAD(+) = 3-amino-2-oxopropyl phosphate + CO2 + NADH. It participates in cofactor biosynthesis; pyridoxine 5'-phosphate biosynthesis; pyridoxine 5'-phosphate from D-erythrose 4-phosphate: step 4/5. In terms of biological role, catalyzes the NAD(P)-dependent oxidation of 4-(phosphooxy)-L-threonine (HTP) into 2-amino-3-oxo-4-(phosphooxy)butyric acid which spontaneously decarboxylates to form 3-amino-2-oxopropyl phosphate (AHAP). The sequence is that of 4-hydroxythreonine-4-phosphate dehydrogenase from Pseudoalteromonas atlantica (strain T6c / ATCC BAA-1087).